The primary structure comprises 1293 residues: Late blight resistance protein R1-A (1293 aa).

Coiled coils occupy residues 423–446 (RYSDSLDFLKNQLQVIQTEFESLQ) and 538–560 (PRMNEEIVGFEDVIENLRKKLLN). The 288-residue stretch at 539 to 826 (RMNEEIVGFE…SEAFIKSSEG (288 aa)) folds into the NB-ARC domain. Position 572–579 (572–579 (GMPGLGKT)) interacts with ATP. 9 LRR repeats span residues 876-899 (AEENFLLWINRDQITKPSSCVYSH), 956-981 (FKFLKVLDLEHRVFIDFIPTELVYLK), 1027-1049 (MVKLRHLYIPDFSTRIEAALLEN), 1056-1079 (LETLSTLYFSRVEDAELMLRKTPN), 1102-1125 (PIRLEILKLYRSKFKTIPFCISAP), 1149-1172 (LKHLEVLILYKVEFGDHREWKVSN), 1175-1197 (FPQLKILKLEYLSLVKWIVADDA), 1198-1222 (FPNLEQLVLRGCQDLMEIPSCFMDI), and 1235-1259 (ESVVKSALNIQETQVEDYQNTNFKL).

Belongs to the disease resistance NB-LRR family.

It localises to the cytoplasm. It is found in the membrane. Functionally, confers resistance to late blight (Phytophthora infestans) races carrying the avirulence gene Avr1. Resistance proteins guard the plant against pathogens that contain an appropriate avirulence protein via an indirect interaction with this avirulence protein. That triggers a defense system including the hypersensitive response, which restricts the pathogen growth. This chain is Late blight resistance protein R1-A (R1A), found in Solanum demissum (Wild potato).